Here is a 281-residue protein sequence, read N- to C-terminus: MKESLISFIKEKIEEYNYRGAVVGVSGGVDSAVVLSLCVQALGKDRVFALILPERDSSKDSLKDAVDFCERLGVEYRKRSITPILRKIGVYRLFPPRLFLPDSIVKRYVLNRWNTLSKDPFLDDLRNTGPEEFLKGLAYYRIKHRIRMCLLYFEAEKRGYAVVGTTNRTEYLTGLYVKWGDEAVDIEPIMHLYKTQVFELAKEMNVPEKILKKPPSPDLIPGITDEMAFNMSYLELDRILMKLEKNEDLSDEDPKKVERVKKILELSEKYRRDIPITFDRI.

24 to 31 (GVSGGVDS) provides a ligand contact to ATP. Asp30 contacts Mg(2+). Arg145 provides a ligand contact to deamido-NAD(+). Thr165 is a binding site for ATP. Position 170 (Glu170) interacts with Mg(2+). Deamido-NAD(+) contacts are provided by Lys178 and Asp185. ATP-binding residues include Lys194 and Ser216.

The protein belongs to the NAD synthetase family. As to quaternary structure, homodimer.

The catalysed reaction is deamido-NAD(+) + NH4(+) + ATP = AMP + diphosphate + NAD(+) + H(+). The protein operates within cofactor biosynthesis; NAD(+) biosynthesis; NAD(+) from deamido-NAD(+) (ammonia route): step 1/1. Its function is as follows. Catalyzes the ATP-dependent amidation of deamido-NAD to form NAD. Uses ammonia as a nitrogen source. The chain is NH(3)-dependent NAD(+) synthetase (nadE1) from Thermotoga maritima (strain ATCC 43589 / DSM 3109 / JCM 10099 / NBRC 100826 / MSB8).